We begin with the raw amino-acid sequence, 185 residues long: ADP-ribosylation factor (185 aa).

Glycine 2 is lipidated: N-myristoyl glycine. GTP is bound by residues 27-34 (GLDAAGKT), 70-74 (DVGGQ), and 129-132 (NKQD).

It belongs to the small GTPase superfamily. Arf family.

Its subcellular location is the golgi apparatus. In terms of biological role, GTP-binding protein involved in protein trafficking; may modulate vesicle budding and uncoating within the Golgi apparatus. In Neurospora crassa (strain ATCC 24698 / 74-OR23-1A / CBS 708.71 / DSM 1257 / FGSC 987), this protein is ADP-ribosylation factor.